The following is a 326-amino-acid chain: tRNA dimethylallyltransferase (326 aa).

Position 18–25 (18–25 (GPTASGKS)) interacts with ATP. Substrate is bound at residue 20 to 25 (TASGKS). Interaction with substrate tRNA stretches follow at residues 43–46 (DSMQ) and 167–171 (QRIAR).

This sequence belongs to the IPP transferase family. Monomer. The cofactor is Mg(2+).

The enzyme catalyses adenosine(37) in tRNA + dimethylallyl diphosphate = N(6)-dimethylallyladenosine(37) in tRNA + diphosphate. In terms of biological role, catalyzes the transfer of a dimethylallyl group onto the adenine at position 37 in tRNAs that read codons beginning with uridine, leading to the formation of N6-(dimethylallyl)adenosine (i(6)A). This chain is tRNA dimethylallyltransferase, found in Rhodospirillum rubrum (strain ATCC 11170 / ATH 1.1.1 / DSM 467 / LMG 4362 / NCIMB 8255 / S1).